The chain runs to 183 residues: Mitochondrial import inner membrane translocase subunit tim17 (183 aa).

3 consecutive transmembrane segments (helical) span residues A13–F33, G57–I77, and V107–M127. The span at M131 to Q141 shows a compositional bias: polar residues. Positions M131–D183 are disordered. The span at H142–K168 shows a compositional bias: basic and acidic residues. The span at Q174–D183 shows a compositional bias: low complexity.

It belongs to the Tim17/Tim22/Tim23 family.

It localises to the mitochondrion inner membrane. Its function is as follows. May be involved in the translocation of transit peptide-containing proteins across the mitochondrial inner membrane. The polypeptide is Mitochondrial import inner membrane translocase subunit tim17 (timm17) (Dictyostelium discoideum (Social amoeba)).